The primary structure comprises 426 residues: Tubby protein homolog 1 (426 aa).

The tract at residues 16–28 (QRKMLEDKQKQKR) is required for localization to cilia in AWB sensory neurons. Residues 19 to 39 (MLEDKQKQKRHQSAGSVRTTS) are disordered.

It belongs to the TUB family. As to quaternary structure, interacts with rgb-3. As to expression, expressed in ciliated sensory neurons.

Its subcellular location is the cytoplasm. It is found in the cell projection. It localises to the axon. The protein resides in the dendrite. The protein localises to the cilium. In terms of biological role, has a role in fat regulation independent of daf-16. Implicated in ciliar sensory function which is required for normal sensory behavior such as chemotaxis. Required for extension and growth of sensory neuronal cilia during postembryonic development, potentially via mediating signaling protein transport and localization of PI(4,5)P2 to the ciliary base. Functions in life span control via the insulin/IGF-1 pathway. Thought to be involved in neuronal trafficking. The chain is Tubby protein homolog 1 from Caenorhabditis elegans.